The sequence spans 565 residues: Zinc finger protein 512 (565 aa).

The interval 1–30 (MSSRLGAVPATSGPTTFKQQRSTRIVGAKN) is disordered. Positions 12-23 (SGPTTFKQQRST) are enriched in polar residues. Glycyl lysine isopeptide (Lys-Gly) (interchain with G-Cter in SUMO2) cross-links involve residues Lys18 and Lys83. The tract at residues 85 to 147 (AATSHVEGSG…QARRIRKEPP (63 aa)) is disordered. Basic residues predominate over residues 118–129 (KKHKLYGRKQRP). A C2H2-type 1 zinc finger spans residues 196-219 (FTCHHCGKQLRSLAGMKYHVMANH). Residue Lys226 forms a Glycyl lysine isopeptide (Lys-Gly) (interchain with G-Cter in SUMO2) linkage. Residues 286–309 (LKCHHCGKPYRSKAGLAYHLRSEH) form a C2H2-type 2 zinc finger. Residue Lys332 forms a Glycyl lysine isopeptide (Lys-Gly) (interchain with G-Cter in SUMO2) linkage. A C2H2-type 3; atypical zinc finger spans residues 405-429 (IQCPNQGCEAVYSSVSGLKAHLGSC). A C2H2-type 4 zinc finger spans residues 439–462 (YKCLLCQKEFVSESGVKYHINSVH). Positions 484–493 (KQRQQEEEKR) are enriched in basic and acidic residues. A disordered region spans residues 484 to 565 (KQRQQEEEKR…PKTNHKRGRK (82 aa)). The segment covering 494 to 507 (RQQHRSRRSLRRRQ) has biased composition (basic residues). Over residues 522–531 (VGKDQRRNEE) the composition is skewed to basic and acidic residues. The segment covering 554–565 (KPPKTNHKRGRK) has biased composition (basic residues).

It belongs to the krueppel C2H2-type zinc-finger protein family.

It is found in the nucleus. May be involved in transcriptional regulation. This is Zinc finger protein 512 (ZNF512) from Macaca fascicularis (Crab-eating macaque).